Consider the following 173-residue polypeptide: Crossover junction endodeoxyribonuclease RuvC (173 aa).

Residues D8, E67, and D139 contribute to the active site. Mg(2+) contacts are provided by D8, E67, and D139.

Belongs to the RuvC family. As to quaternary structure, homodimer which binds Holliday junction (HJ) DNA. The HJ becomes 2-fold symmetrical on binding to RuvC with unstacked arms; it has a different conformation from HJ DNA in complex with RuvA. In the full resolvosome a probable DNA-RuvA(4)-RuvB(12)-RuvC(2) complex forms which resolves the HJ. The cofactor is Mg(2+).

The protein resides in the cytoplasm. The enzyme catalyses Endonucleolytic cleavage at a junction such as a reciprocal single-stranded crossover between two homologous DNA duplexes (Holliday junction).. Functionally, the RuvA-RuvB-RuvC complex processes Holliday junction (HJ) DNA during genetic recombination and DNA repair. Endonuclease that resolves HJ intermediates. Cleaves cruciform DNA by making single-stranded nicks across the HJ at symmetrical positions within the homologous arms, yielding a 5'-phosphate and a 3'-hydroxyl group; requires a central core of homology in the junction. The consensus cleavage sequence is 5'-(A/T)TT(C/G)-3'. Cleavage occurs on the 3'-side of the TT dinucleotide at the point of strand exchange. HJ branch migration catalyzed by RuvA-RuvB allows RuvC to scan DNA until it finds its consensus sequence, where it cleaves and resolves the cruciform DNA. In Citrobacter koseri (strain ATCC BAA-895 / CDC 4225-83 / SGSC4696), this protein is Crossover junction endodeoxyribonuclease RuvC.